The sequence spans 230 residues: Cytidylate kinase (230 aa).

ATP is bound at residue 17–25 (GPTASGKGT).

The protein belongs to the cytidylate kinase family. Type 1 subfamily.

It localises to the cytoplasm. It carries out the reaction CMP + ATP = CDP + ADP. The enzyme catalyses dCMP + ATP = dCDP + ADP. This is Cytidylate kinase from Ralstonia nicotianae (strain ATCC BAA-1114 / GMI1000) (Ralstonia solanacearum).